Consider the following 344-residue polypeptide: Peroxidase 36 (344 aa).

The first 28 residues, 1 to 28, serve as a signal peptide directing secretion; it reads MNTKTVKSMAGIVLSQISLVALFPLCIC. 4 disulfides stabilise this stretch: C50–C130, C83–C88, C136–C337, and C215–C247. H81 functions as the Proton acceptor in the catalytic mechanism. 5 residues coordinate Ca(2+): D82, V85, G87, D89, and S91. P178 is a binding site for substrate. H208 serves as a coordination point for heme b. Position 209 (T209) interacts with Ca(2+). N224 carries an N-linked (GlcNAc...) asparagine glycan. Residues D260, T263, and D268 each contribute to the Ca(2+) site.

It belongs to the peroxidase family. Classical plant (class III) peroxidase subfamily. Heme b serves as cofactor. Requires Ca(2+) as cofactor.

The protein resides in the secreted. The enzyme catalyses 2 a phenolic donor + H2O2 = 2 a phenolic radical donor + 2 H2O. Its function is as follows. Removal of H(2)O(2), oxidation of toxic reductants, biosynthesis and degradation of lignin, suberization, auxin catabolism, response to environmental stresses such as wounding, pathogen attack and oxidative stress. These functions might be dependent on each isozyme/isoform in each plant tissue. This chain is Peroxidase 36 (PER36), found in Arabidopsis thaliana (Mouse-ear cress).